The following is a 232-amino-acid chain: Transcriptional regulatory protein CpxR (232 aa).

In terms of domain architecture, Response regulatory spans 3 to 115; that stretch reads KILLVDDDRE…ELVARIRAIL (113 aa). The residue at position 51 (Asp-51) is a 4-aspartylphosphate. The segment at residues 131–230 is a DNA-binding region (ompR/PhoB-type); sequence SPTLEVDALV…LRGRGYLMVS (100 aa).

Phosphorylated by CpxA.

The protein localises to the cytoplasm. In terms of biological role, member of the two-component regulatory system CpxA/CpxR. This system combats a variety of extracytoplasmic protein-mediated toxicities. It performs this function by increasing the synthesis of the periplasmic protease, DegP as well as that of CpxP protein. In Escherichia coli O157:H7, this protein is Transcriptional regulatory protein CpxR (cpxR).